Reading from the N-terminus, the 399-residue chain is 26S proteasome regulatory subunit 10B homolog A (399 aa).

At Thr-2 the chain carries N-acetylthreonine. 180–187 (GPPGTGKT) lines the ATP pocket. Lys-203 participates in a covalent cross-link: Glycyl lysine isopeptide (Lys-Gly) (interchain with G-Cter in ubiquitin).

It belongs to the AAA ATPase family. In terms of assembly, component of the 19S regulatory particle (RP/PA700) base subcomplex of the 26S proteasome. The 26S proteasome is composed of a core protease (CP), known as the 20S proteasome, capped at one or both ends by the 19S regulatory particle (RP/PA700). The RP/PA700 complex is composed of at least 17 different subunits in two subcomplexes, the base and the lid, which form the portions proximal and distal to the 20S proteolytic core, respectively.

It is found in the cytoplasm. The protein resides in the nucleus. Functionally, the 26S proteasome is involved in the ATP-dependent degradation of ubiquitinated proteins. The regulatory (or ATPase) complex confers ATP dependency and substrate specificity to the 26S complex. The sequence is that of 26S proteasome regulatory subunit 10B homolog A (RPT4A) from Arabidopsis thaliana (Mouse-ear cress).